Consider the following 39-residue polypeptide: Omega-theraphotoxin-Asp1g (39 aa).

3 disulfides stabilise this stretch: Cys-4–Cys-25, Cys-8–Cys-31, and Cys-17–Cys-36.

The protein belongs to the neurotoxin 12 (Hwtx-2) family. 06 (TXP1) subfamily. As to expression, expressed by the venom gland.

The protein localises to the secreted. Inhibits voltage-gated calcium channels (Cav) in rat cerebellar granule cells. Has insecticidal activity. This Aphonopelma sp. (American tarantula) protein is Omega-theraphotoxin-Asp1g.